A 94-amino-acid polypeptide reads, in one-letter code: UPF0235 protein TK0768 (94 aa).

The protein belongs to the UPF0235 family.

This is UPF0235 protein TK0768 from Thermococcus kodakarensis (strain ATCC BAA-918 / JCM 12380 / KOD1) (Pyrococcus kodakaraensis (strain KOD1)).